Reading from the N-terminus, the 447-residue chain is Argininosuccinate synthase (447 aa).

ATP-binding positions include 20–28 (AFSGGLDTS) and Ala-46. L-citrulline is bound at residue Tyr-102. ATP contacts are provided by Gly-132 and Thr-134. Residues Thr-134, Asn-138, and Asp-139 each contribute to the L-aspartate site. Asn-138 contacts L-citrulline. An ATP-binding site is contributed by Asp-139. Positions 142 and 195 each coordinate L-citrulline. Asp-197 serves as a coordination point for ATP. L-citrulline is bound by residues Thr-204, Glu-206, and Glu-283.

It belongs to the argininosuccinate synthase family. Type 2 subfamily. As to quaternary structure, homotetramer.

It localises to the cytoplasm. It carries out the reaction L-citrulline + L-aspartate + ATP = 2-(N(omega)-L-arginino)succinate + AMP + diphosphate + H(+). It functions in the pathway amino-acid biosynthesis; L-arginine biosynthesis; L-arginine from L-ornithine and carbamoyl phosphate: step 2/3. In Neisseria meningitidis serogroup C / serotype 2a (strain ATCC 700532 / DSM 15464 / FAM18), this protein is Argininosuccinate synthase.